The primary structure comprises 1543 residues: ABC multidrug transporter AFR1 (1543 aa).

Residues 1 to 85 (MSAAGVPAEL…DGKQKRLPAD (85 aa)) are disordered. Over residues 18 to 41 (TATTQNPSGLANSQVTSGPVSSAT) the composition is skewed to polar residues. The span at 62–83 (AVEAEKAEAIDAAGDGKQKRLP) shows a compositional bias: basic and acidic residues. Asparagine 117 is a glycosylation site (N-linked (GlcNAc...) asparagine). Residues 119-157 (SQRSQHELHRPTTRHSVRSSFSRKDRVVSRLTQDDAEKA) are disordered. Residues 140–157 (SRKDRVVSRLTQDDAEKA) show a composition bias toward basic and acidic residues. N-linked (GlcNAc...) asparagine glycans are attached at residues asparagine 208 and asparagine 398. An ABC transporter 1 domain is found at 222–474 (IKVLGIFGFN…MIGLGYRDLP (253 aa)). 5 helical membrane passes run 585-605 (FGIS…GSVY), 619-639 (GGLL…ELPS), 670-690 (VPYN…MGGL), 695-715 (GAFF…SAFF), and 727-747 (VAAR…GYMI). Asparagine 823 is a glycosylation site (N-linked (GlcNAc...) asparagine). Residues 845-865 (FGILLGFFTFFMFLQMLFIEV) traverse the membrane as a helical segment. The 243-residue stretch at 918–1160 (FTWEGLSYTV…VLIDYLERNG (243 aa)) folds into the ABC transporter 2 domain. Position 954-961 (954-961 (GASGAGKT)) interacts with ATP. Asparagine 1223 carries an N-linked (GlcNAc...) asparagine glycan. 6 helical membrane passes run 1254-1274 (WTRL…FLQL), 1285-1305 (VFAI…IEPQ), 1336-1356 (MPYS…GVGF), 1366-1386 (FFLM…AVAA), 1391-1411 (ILIA…FCGV), and 1517-1537 (FGIF…AARF).

The protein belongs to the ABC transporter superfamily. ABCG family. PDR (TC 3.A.1.205) subfamily.

It localises to the cell membrane. It catalyses the reaction itraconazole(in) + ATP + H2O = itraconazole(out) + ADP + phosphate + H(+). The catalysed reaction is voriconazole(in) + ATP + H2O = voriconazole(out) + ADP + phosphate + H(+). The enzyme catalyses fluconazole(in) + ATP + H2O = fluconazole(out) + ADP + phosphate + H(+). Its function is as follows. Major pleiotropic ABC efflux transporter that confers resistance to structurally and functionally unrelated compounds including azoles such as fluconazole (FLC), itraconazole (ITC), posaconazole (POS), and voriconazole (VRC). Is also able to efflux the eukaryote protein synthesis inhibitor cycloheximide (CHX). The sequence is that of ABC multidrug transporter AFR1 from Cryptococcus neoformans var. grubii serotype A (strain H99 / ATCC 208821 / CBS 10515 / FGSC 9487) (Filobasidiella neoformans var. grubii).